A 4007-amino-acid chain; its full sequence is PKS-NRPS hybrid synthetase psoA (4007 aa).

In terms of domain architecture, Ketosynthase family 3 (KS3) spans lysine 8–serine 444. Active-site for beta-ketoacyl synthase activity residues include cysteine 182, histidine 321, and histidine 364. The tract at residues valine 575–leucine 897 is malonyl-CoA:ACP transacylase (MAT) domain. An N-terminal hotdog fold region spans residues histidine 969 to glutamate 1105. The tract at residues histidine 969–methionine 1147 is dehydratase (DH) domain. The PKS/mFAS DH domain maps to histidine 969–lysine 1276. Histidine 1001 (proton acceptor; for dehydratase activity) is an active-site residue. The C-terminal hotdog fold stretch occupies residues aspartate 1120–lysine 1276. Aspartate 1179 acts as the Proton donor; for dehydratase activity in catalysis. The interval threonine 2131–valine 2305 is ketoreductase (KR) domain. Residues glutamate 2418–leucine 2495 form the Carrier 1 domain. Residue serine 2455 is modified to O-(pantetheine 4'-phosphoryl)serine. Residues proline 2513–proline 2550 are disordered. The span at arginine 2518–aspartate 2531 shows a compositional bias: basic and acidic residues. Residues glutamine 2589–valine 2885 are condensation (C) domain. The segment at threonine 3076–glutamine 3478 is adenylation (A) domain. Residues threonine 3576–serine 3652 form the Carrier 2 domain. At serine 3612 the chain carries O-(pantetheine 4'-phosphoryl)serine. A reductase (R) domain region spans residues leucine 3696–isoleucine 3920.

The protein in the C-terminal section; belongs to the NRP synthetase family.

The protein operates within secondary metabolite biosynthesis. In terms of biological role, PKS-NRPS hybrid synthetase; part of the gene cluster that mediates the biosynthesis of pseurotin A, a competitive inhibitor of chitin synthase and an inducer of nerve-cell proliferation. The PKS-NRPS hybrid synthetase psoA is responsible for the biosynthesis of azaspirene, one of the first intermediates having the 1-oxa-7-azaspiro[4,4]-non-2-ene-4,6-dione core of pseurotin, via condensation of one acetyl-CoA, 4 malonyl-CoA, and a L-phenylalanine molecule. The dual-functional monooxygenase/methyltransferase psoF seems to be involved in the addition of the C3 methyl group onto the pseurotin scaffold. Azaspirene is then converted to synerazol through 4 steps including oxidation of C17 by the cytochrome P450 monooxygenase psoD, O-methylation of the hydroxy group of C8 by the methyltransferase psoC, and the trans-to-cis isomerization of the C13 olefin by the glutathione S-transferase psoE. The fourth step of synerazol production is performed by the dual-functional monooxygenase/methyltransferase psoF which seems to catalyze the epoxidation of the intermediate deepoxy-synerazol. Synerazol can be attacked by a water molecule nonenzymatically at two different positions to yield two diol products, pseurotin A and pseurotin D. This is PKS-NRPS hybrid synthetase psoA from Aspergillus fumigatus (strain ATCC MYA-4609 / CBS 101355 / FGSC A1100 / Af293) (Neosartorya fumigata).